The primary structure comprises 342 residues: Ferredoxin--NADP reductase (342 aa).

The FAD site is built by cysteine 17, aspartate 36, glutamine 44, tyrosine 49, isoleucine 89, phenylalanine 124, aspartate 289, and threonine 330.

The protein belongs to the ferredoxin--NADP reductase type 2 family. In terms of assembly, homodimer. Requires FAD as cofactor.

The enzyme catalyses 2 reduced [2Fe-2S]-[ferredoxin] + NADP(+) + H(+) = 2 oxidized [2Fe-2S]-[ferredoxin] + NADPH. The protein is Ferredoxin--NADP reductase of Rhodopseudomonas palustris (strain BisB18).